The sequence spans 408 residues: Homogentisate geranylgeranyltransferase (408 aa).

A chloroplast-targeting transit peptide spans 1 to 68 (MQATTAAAAA…SAISQATSPR (68 aa)). The next 9 membrane-spanning stretches (helical) occupy residues 122 to 142 (HTIF…MKSI), 149 to 169 (VLKG…YVVG), 194 to 214 (SVAT…SIGI), 217 to 237 (GSVP…AYSI), 248 to 268 (ALLA…LAFF), 286 to 306 (LVFA…FKDI), 329 to 349 (VYQL…VVGA), 352 to 372 (THLL…LTLW), and 386 to 406 (VTSF…LIPF).

The protein belongs to the UbiA prenyltransferase family.

It localises to the plastid. The protein resides in the chloroplast membrane. The enzyme catalyses homogentisate + (2E,6E,10E)-geranylgeranyl diphosphate + H(+) = 6-geranylgeranyl-2-methylbenzene-1,4-diol + CO2 + diphosphate. It functions in the pathway cofactor biosynthesis; tocopherol biosynthesis. Functionally, involved in the synthesis of tocotrienol (vitamin E). Catalyzes the condensation of homogentisate and geranylgeranyl diphosphate to form 2-methyl-6-geranylgeranylbenzoquinol. Possesses low activity with phytyl diphosphate as substrate. This is Homogentisate geranylgeranyltransferase from Triticum aestivum (Wheat).